The primary structure comprises 260 residues: Putative ATP-binding protein BruAb2_1123 (260 aa).

The ABC transporter domain maps to Ile5–Ile228. Residue Gly37–Ser44 participates in ATP binding.

The protein belongs to the ABC transporter superfamily. The complex is composed of two ATP-binding proteins (BruAb2_1123), two transmembrane proteins (BruAb2_1124) and a solute-binding protein (BruAb2_1122).

The protein localises to the cell inner membrane. Probably part of an ABC transporter complex. Probably Responsible for energy coupling to the transport system. The chain is Putative ATP-binding protein BruAb2_1123 from Brucella abortus biovar 1 (strain 9-941).